We begin with the raw amino-acid sequence, 265 residues long: Energy-coupling factor transporter transmembrane protein EcfT (265 aa).

The next 6 helical transmembrane spans lie at Val29–Phe49, Phe63–Leu83, Leu94–Phe114, Phe117–Thr137, Ile143–Ile163, and Arg243–Leu263.

This sequence belongs to the energy-coupling factor EcfT family. Forms a stable energy-coupling factor (ECF) transporter complex composed of 2 membrane-embedded substrate-binding proteins (S component), 2 ATP-binding proteins (A component) and 2 transmembrane proteins (T component). May be able to interact with more than 1 S component at a time.

Its subcellular location is the cell membrane. Functionally, transmembrane (T) component of an energy-coupling factor (ECF) ABC-transporter complex. Unlike classic ABC transporters this ECF transporter provides the energy necessary to transport a number of different substrates. In Listeria innocua serovar 6a (strain ATCC BAA-680 / CLIP 11262), this protein is Energy-coupling factor transporter transmembrane protein EcfT.